A 122-amino-acid chain; its full sequence is Large ribosomal subunit protein uL14c (122 aa).

Belongs to the universal ribosomal protein uL14 family. As to quaternary structure, part of the 50S ribosomal subunit.

The protein resides in the plastid. Its subcellular location is the chloroplast. Binds to 23S rRNA. The sequence is that of Large ribosomal subunit protein uL14c from Ipomoea purpurea (Common morning glory).